Consider the following 271-residue polypeptide: TIP41-like protein (271 aa).

Position 106 is an N6-acetyllysine (Lys106). The segment at Arg173–Glu271 is interaction with PPP2CA. Phosphoserine occurs at positions 265 and 270.

Belongs to the TIP41 family. As to quaternary structure, interacts with PPP2CA. Interacts with PPP2CB, PPP4C and PPP6C. Interacts with IGBP1; the interaction is dependent on PPP2CA. Associates with a protein phosphatase 2A PP2A(C):IGBP1 complex. Interacts with PPP4C and PPP4R2.

The protein resides in the cytoplasm. May be a allosteric regulator of serine/threonine-protein phosphatase 2A (PP2A). Inhibits catalytic activity of the PP2A(D) core complex in vitro. The PP2A(C):TIPRL complex does not show phosphatase activity. Acts as a negative regulator of serine/threonine-protein phosphatase 4 probably by inhibiting the formation of the active PPP4C:PPP4R2 complex; the function is proposed to implicate it in DNA damage response by promoting H2AX phosphorylated on Ser-140 (gamma-H2AX). May play a role in the regulation of ATM/ATR signaling pathway controlling DNA replication and repair. The polypeptide is TIP41-like protein (Tiprl) (Rattus norvegicus (Rat)).